We begin with the raw amino-acid sequence, 756 residues long: Anaphase-promoting complex subunit 5 (756 aa).

4 TPR repeats span residues 301 to 334 (RYAALNLAALHCRFGHYQQAELALQEAIRIAQES), 522 to 555 (DGRYHIADSLVAGITALNSIEGMYRKAIVLKAQN), 581 to 614 (ISVLLSVAELYWRSSCHTIALPVLLQALAFSREY), and 678 to 711 (YSQQKKAEALESAILNLNEAKTYLAKVDCKEQLR).

Belongs to the APC5 family. The APC/C is composed of at least 12 subunits.

Its subcellular location is the nucleus. The protein localises to the cytoplasm. The protein resides in the cytoskeleton. It is found in the spindle. It participates in protein modification; protein ubiquitination. In terms of biological role, component of the anaphase promoting complex/cyclosome (APC/C), a cell cycle-regulated E3 ubiquitin ligase that controls progression through mitosis and the G1 phase of the cell cycle. The APC/C complex acts by mediating ubiquitination and subsequent degradation of target proteins: it mainly mediates the formation of 'Lys-11'-linked polyubiquitin chains and, to a lower extent, the formation of 'Lys-48'- and 'Lys-63'-linked polyubiquitin chains. The APC/C complex catalyzes assembly of branched 'Lys-11'-/'Lys-48'-linked branched ubiquitin chains on target proteins. This Gallus gallus (Chicken) protein is Anaphase-promoting complex subunit 5 (ANAPC5).